We begin with the raw amino-acid sequence, 212 residues long: ATP phosphoribosyltransferase (212 aa).

It belongs to the ATP phosphoribosyltransferase family. Short subfamily. As to quaternary structure, heteromultimer composed of HisG and HisZ subunits.

The protein localises to the cytoplasm. The catalysed reaction is 1-(5-phospho-beta-D-ribosyl)-ATP + diphosphate = 5-phospho-alpha-D-ribose 1-diphosphate + ATP. It functions in the pathway amino-acid biosynthesis; L-histidine biosynthesis; L-histidine from 5-phospho-alpha-D-ribose 1-diphosphate: step 1/9. Functionally, catalyzes the condensation of ATP and 5-phosphoribose 1-diphosphate to form N'-(5'-phosphoribosyl)-ATP (PR-ATP). Has a crucial role in the pathway because the rate of histidine biosynthesis seems to be controlled primarily by regulation of HisG enzymatic activity. This Clostridium botulinum (strain Okra / Type B1) protein is ATP phosphoribosyltransferase.